The following is a 1295-amino-acid chain: Phosphoribosylformylglycinamidine synthase (1295 aa).

Positions 305–327 (WPGAATGSGGEIRDEGATGRGAK) are disordered. Residues 307–318 (GAATGSGGEIRD) and Ala678 each bind ATP. Residues Glu718, Asn722, and Asp884 each coordinate Mg(2+). Position 886 (Ser886) interacts with ATP. Residues 1042–1295 (VAVLREQGVN…IFRNARKQLG (254 aa)) form the Glutamine amidotransferase type-1 domain. Cys1135 acts as the Nucleophile in catalysis. Residues His1260 and Glu1262 contribute to the active site.

This sequence in the N-terminal section; belongs to the FGAMS family. As to quaternary structure, monomer. In terms of processing, both N-terminus methionine truncation and retention have been observed for this protein.

The protein resides in the cytoplasm. The enzyme catalyses N(2)-formyl-N(1)-(5-phospho-beta-D-ribosyl)glycinamide + L-glutamine + ATP + H2O = 2-formamido-N(1)-(5-O-phospho-beta-D-ribosyl)acetamidine + L-glutamate + ADP + phosphate + H(+). Its pathway is purine metabolism; IMP biosynthesis via de novo pathway; 5-amino-1-(5-phospho-D-ribosyl)imidazole from N(2)-formyl-N(1)-(5-phospho-D-ribosyl)glycinamide: step 1/2. In terms of biological role, phosphoribosylformylglycinamidine synthase involved in the purines biosynthetic pathway. Catalyzes the ATP-dependent conversion of formylglycinamide ribonucleotide (FGAR) and glutamine to yield formylglycinamidine ribonucleotide (FGAM) and glutamate. The polypeptide is Phosphoribosylformylglycinamidine synthase (Escherichia coli (strain K12)).